Here is a 116-residue protein sequence, read N- to C-terminus: Ribonuclease P protein component (116 aa).

Belongs to the RnpA family. As to quaternary structure, consists of a catalytic RNA component (M1 or rnpB) and a protein subunit.

It carries out the reaction Endonucleolytic cleavage of RNA, removing 5'-extranucleotides from tRNA precursor.. Its function is as follows. RNaseP catalyzes the removal of the 5'-leader sequence from pre-tRNA to produce the mature 5'-terminus. It can also cleave other RNA substrates such as 4.5S RNA. The protein component plays an auxiliary but essential role in vivo by binding to the 5'-leader sequence and broadening the substrate specificity of the ribozyme. This chain is Ribonuclease P protein component, found in Geobacillus sp. (strain WCH70).